Consider the following 61-residue polypeptide: Metallothionein-1M (61 aa).

The tract at residues 1-29 (MDPNCSCTTGVSCACTGSCTCKECKCTSC) is beta. A divalent metal cation is bound by residues cysteine 5, cysteine 7, cysteine 13, cysteine 15, cysteine 19, cysteine 21, cysteine 24, cysteine 26, cysteine 29, cysteine 33, cysteine 34, cysteine 36, cysteine 37, cysteine 41, cysteine 44, cysteine 48, cysteine 50, cysteine 57, cysteine 59, and cysteine 60. Residues 30–61 (KKSCCSCCPVGCAKCAHGCVCKGTLENCSCCA) are alpha.

This sequence belongs to the metallothionein superfamily. Type 1 family. In terms of assembly, monomer.

Functionally, metallothioneins have a high content of cysteine residues that bind various heavy metals; these proteins are transcriptionally regulated by both heavy metals and glucocorticoids. This chain is Metallothionein-1M (MT1M), found in Homo sapiens (Human).